The following is a 166-amino-acid chain: Lipoprotein signal peptidase (166 aa).

4 helical membrane passes run 9-29 (ASGA…FDQL), 45-65 (ALTS…FGFL), 71-91 (WQRW…CFLL), and 100-120 (FSLS…DRLV). Active-site residues include aspartate 126 and aspartate 144. A helical transmembrane segment spans residues 135-155 (WHFPAFNLADSAITIGAVLLI).

This sequence belongs to the peptidase A8 family.

The protein resides in the cell inner membrane. It catalyses the reaction Release of signal peptides from bacterial membrane prolipoproteins. Hydrolyzes -Xaa-Yaa-Zaa-|-(S,diacylglyceryl)Cys-, in which Xaa is hydrophobic (preferably Leu), and Yaa (Ala or Ser) and Zaa (Gly or Ala) have small, neutral side chains.. It functions in the pathway protein modification; lipoprotein biosynthesis (signal peptide cleavage). In terms of biological role, this protein specifically catalyzes the removal of signal peptides from prolipoproteins. The polypeptide is Lipoprotein signal peptidase (Burkholderia multivorans (strain ATCC 17616 / 249)).